The primary structure comprises 102 residues: COX assembly mitochondrial protein 2 homolog (102 aa).

The region spanning threonine 11–arginine 55 is the CHCH domain. 2 short sequence motifs (cx9C motif) span residues cysteine 14 to cysteine 24 and cysteine 37 to cysteine 47. 2 cysteine pairs are disulfide-bonded: cysteine 14/cysteine 47 and cysteine 24/cysteine 37.

The protein belongs to the CMC family.

It localises to the mitochondrion. Its function is as follows. May be involved in cytochrome c oxidase biogenesis. This Caenorhabditis elegans protein is COX assembly mitochondrial protein 2 homolog.